Consider the following 701-residue polypeptide: Serologically defined colon cancer antigen 8 homolog (701 aa).

Positions 1 to 13 (MKPSLESDEEEEL) are enriched in acidic residues. 2 disordered regions span residues 1-67 (MKPS…VQQS) and 84-114 (ANIQ…GVHN). Polar residues predominate over residues 45–67 (SEPNQQELLSSVQQNPCSPVQQS). Coiled coils occupy residues 119–173 (INNQ…LKEY), 203–258 (HKWR…AVAA), and 323–695 (QQVK…AGKR). The segment at 364-387 (LASEQDKISQAREAARSESKKERE) is disordered.

The protein localises to the cytoplasm. It localises to the cytoskeleton. It is found in the microtubule organizing center. The protein resides in the centrosome. Its subcellular location is the centriole. The protein localises to the cilium basal body. It localises to the cell junction. In terms of biological role, plays a role in the establishment of cell polarity and epithelial lumen formation. Also plays an essential role in ciliogenesis and subsequent Hedgehog signaling pathway that requires the presence of intact primary cilia for pathway activation. Mechanistically, interacts with and mediates RABEP2 centrosomal localization which is critical for ciliogenesis. In Danio rerio (Zebrafish), this protein is Serologically defined colon cancer antigen 8 homolog (Sdccag8).